We begin with the raw amino-acid sequence, 196 residues long: Carnitine operon protein CaiE (196 aa).

Residues 173–196 (TQPLRQMEENRPRLQGTTDVTPKR) are disordered. Positions 187-196 (QGTTDVTPKR) are enriched in polar residues.

The protein belongs to the transferase hexapeptide repeat family.

It functions in the pathway amine and polyamine metabolism; carnitine metabolism. Its function is as follows. Overproduction of CaiE stimulates the activity of CaiB and CaiD. This Shigella flexneri serotype 5b (strain 8401) protein is Carnitine operon protein CaiE.